The following is a 526-amino-acid chain: Calcium-dependent protein kinase 28 (526 aa).

The tract at residues 1-37 (MQPDPQPHGRGREKAAGAGPRLPPPVTAPSVGRPASV) is disordered. In terms of domain architecture, Protein kinase spans 49–307 (YRIGKKLGQG…AHEVLCHPWI (259 aa)). Residues 55–63 (LGQGQFGTT) and lysine 78 contribute to the ATP site. Aspartate 173 functions as the Proton acceptor in the catalytic mechanism. Residues 313–343 (APDKPIDSAVLSRLKHFSAMNKLKKMALRVI) are autoinhibitory domain. EF-hand domains are found at residues 350–385 (EEIGGLKELFKMIDTDNSGTITYDELKNGLKRVGSD), 386–421 (LMEPEIQALMDAADIDNSGTIDYGEFLAATLHMNKL), 422–457 (EREENLVSAFTFFDKDGSGFITIDELSQACEQFGLS), and 460–491 (HLEDMIKDVDQNNDGQIDYSEFAAMMRKGNAG). The Ca(2+) site is built by aspartate 363, aspartate 365, serine 367, threonine 369, glutamate 374, aspartate 399, aspartate 401, serine 403, threonine 405, glutamate 410, aspartate 435, aspartate 437, serine 439, glutamate 446, aspartate 469, asparagine 471, aspartate 473, glutamine 475, and glutamate 480.

Belongs to the protein kinase superfamily. Ser/Thr protein kinase family. CDPK subfamily.

The enzyme catalyses L-seryl-[protein] + ATP = O-phospho-L-seryl-[protein] + ADP + H(+). It catalyses the reaction L-threonyl-[protein] + ATP = O-phospho-L-threonyl-[protein] + ADP + H(+). With respect to regulation, activated by calcium. Autophosphorylation may play an important role in the regulation of the kinase activity. In terms of biological role, may play a role in signal transduction pathways that involve calcium as a second messenger. In Oryza sativa subsp. japonica (Rice), this protein is Calcium-dependent protein kinase 28.